The primary structure comprises 277 residues: Bifunctional protein FolD (277 aa).

NADP(+)-binding positions include G160–S162, S185, and I226.

The protein belongs to the tetrahydrofolate dehydrogenase/cyclohydrolase family. Homodimer.

The catalysed reaction is (6R)-5,10-methylene-5,6,7,8-tetrahydrofolate + NADP(+) = (6R)-5,10-methenyltetrahydrofolate + NADPH. It catalyses the reaction (6R)-5,10-methenyltetrahydrofolate + H2O = (6R)-10-formyltetrahydrofolate + H(+). The protein operates within one-carbon metabolism; tetrahydrofolate interconversion. Functionally, catalyzes the oxidation of 5,10-methylenetetrahydrofolate to 5,10-methenyltetrahydrofolate and then the hydrolysis of 5,10-methenyltetrahydrofolate to 10-formyltetrahydrofolate. In Vesicomyosocius okutanii subsp. Calyptogena okutanii (strain HA), this protein is Bifunctional protein FolD.